We begin with the raw amino-acid sequence, 192 residues long: MASRKTISFVTGNKNKLKEVQQFLHGSSSINITSVPLDLPEYQGEPDDVSKQKCAEASKQLSGPVLIEDTCLCFNAMGGLPGPYVKWFLEKLGPEGIYKMLDGWEDKSGYALCTFAYSNGLQGDDVLLFRGKCEGTIVPPRGPRTFGWDPCFQPNGFNETYAEMSSELKNSISHRGKALEALSEYFKEKNCD.

ITP is bound at residue 11–16 (TGNKNK). Glutamate 41 contacts Mg(2+). ITP is bound by residues lysine 53, 69–70 (DT), lysine 86, 146–149 (FGWD), lysine 169, and 174–175 (HR).

It belongs to the HAM1 NTPase family. Homodimer. Mg(2+) is required as a cofactor. The cofactor is Mn(2+).

It is found in the cytoplasm. It catalyses the reaction ITP + H2O = IMP + diphosphate + H(+). The catalysed reaction is dITP + H2O = dIMP + diphosphate + H(+). The enzyme catalyses XTP + H2O = XMP + diphosphate + H(+). Functionally, pyrophosphatase that hydrolyzes non-canonical purine nucleotides such as inosine triphosphate (ITP), deoxyinosine triphosphate (dITP) or xanthosine 5'-triphosphate (XTP) to their respective monophosphate derivatives. The enzyme does not distinguish between the deoxy- and ribose forms. Probably excludes non-canonical purines from RNA and DNA precursor pools, thus preventing their incorporation into RNA and DNA and avoiding chromosomal lesions. This Ciona intestinalis (Transparent sea squirt) protein is Inosine triphosphate pyrophosphatase.